A 796-amino-acid polypeptide reads, in one-letter code: ATP-dependent DNA helicase PIF6 (796 aa).

The tract at residues 197 to 230 is disordered; that stretch reads RPTGLPSAHSGGKLPKHMGGDELNPQLEGSTTPG. ATP is bound at residue 255–262; sequence GSAGTGKT. Residues 636-655 mediate DNA binding; it reads QAYVALSRVRSREDLMLTAF. Disordered stretches follow at residues 692–719 and 762–796; these read KGKTRAKHPRSQGEKNSVDEGGNAPEEH and TSSAIPNFTQESNNGDANSQLQHPFSQNNLMVDDD.

Belongs to the helicase family. PIF1 subfamily. In terms of assembly, monomer. It depends on Mg(2+) as a cofactor.

It is found in the nucleus. The catalysed reaction is Couples ATP hydrolysis with the unwinding of duplex DNA at the replication fork by translocating in the 5'-3' direction. This creates two antiparallel DNA single strands (ssDNA). The leading ssDNA polymer is the template for DNA polymerase III holoenzyme which synthesizes a continuous strand.. It catalyses the reaction ATP + H2O = ADP + phosphate + H(+). In terms of biological role, DNA-dependent ATPase and 5'-3' DNA helicase required for the maintenance of genome stability. The protein is ATP-dependent DNA helicase PIF6 of Trypanosoma brucei brucei (strain 927/4 GUTat10.1).